We begin with the raw amino-acid sequence, 156 residues long: Transcriptional repressor NrdR (156 aa).

Residues 3 to 34 (CPSCQFNGTRVVDSRPVDDNKEIRRRRECESC) fold into a zinc finger. The region spanning 49 to 139 (LVVVKKEGSR…VYRQFKDINV (91 aa)) is the ATP-cone domain.

The protein belongs to the NrdR family. The cofactor is Zn(2+).

Negatively regulates transcription of bacterial ribonucleotide reductase nrd genes and operons by binding to NrdR-boxes. In Lysinibacillus sphaericus (strain C3-41), this protein is Transcriptional repressor NrdR.